The sequence spans 429 residues: TNF receptor-associated factor family protein DDB_G0267744 (429 aa).

The RING-type; degenerate zinc-finger motif lies at 22-60 (CVICSHLQVDIYQCVEGHFACKNCFLKMIELKKQCMTCR). 2 TRAF-type zinc fingers span residues 151 to 203 (HHLK…GEFN) and 204 to 265 (NHQD…SNSE).

It belongs to the TNF receptor-associated factor family.

The protein localises to the cytoplasm. Its function is as follows. Probable adapter protein and signal transducer that links members of the tumor necrosis factor receptor family to different signaling pathways by association with the receptor cytoplasmic domain and kinases. The polypeptide is TNF receptor-associated factor family protein DDB_G0267744 (Dictyostelium discoideum (Social amoeba)).